Consider the following 132-residue polypeptide: Small ribosomal subunit protein uS9 (132 aa).

This sequence belongs to the universal ribosomal protein uS9 family.

The polypeptide is Small ribosomal subunit protein uS9 (Baumannia cicadellinicola subsp. Homalodisca coagulata).